The sequence spans 174 residues: Small ribosomal subunit protein uS5 (174 aa).

One can recognise an S5 DRBM domain in the interval leucine 19–valine 82.

This sequence belongs to the universal ribosomal protein uS5 family. In terms of assembly, part of the 30S ribosomal subunit. Contacts proteins S4 and S8.

In terms of biological role, with S4 and S12 plays an important role in translational accuracy. Functionally, located at the back of the 30S subunit body where it stabilizes the conformation of the head with respect to the body. This chain is Small ribosomal subunit protein uS5, found in Bordetella bronchiseptica (strain ATCC BAA-588 / NCTC 13252 / RB50) (Alcaligenes bronchisepticus).